Consider the following 143-residue polypeptide: Peptidyl-prolyl cis-trans isomerase B (143 aa).

Positions 1-143 (MKTGYFLLED…DVMKEVRVEG (143 aa)) constitute a PPIase cyclophilin-type domain.

It belongs to the cyclophilin-type PPIase family.

Its subcellular location is the cytoplasm. The catalysed reaction is [protein]-peptidylproline (omega=180) = [protein]-peptidylproline (omega=0). Its activity is regulated as follows. Inhibited by cyclosporin A (CsA). Its function is as follows. PPIases accelerate the folding of proteins. It catalyzes the cis-trans isomerization of proline imidic peptide bonds in oligopeptides. This is Peptidyl-prolyl cis-trans isomerase B (ppiB) from Bacillus subtilis (strain 168).